Here is a 67-residue protein sequence, read N- to C-terminus: ATP synthase F(0) complex subunit 8 (67 aa).

The chain crosses the membrane as a helical span at residues 8–24 (TWFINIVSMILTLFIVF). K54 bears the N6-acetyllysine; alternate mark. K54 is subject to N6-succinyllysine; alternate. N6-acetyllysine is present on K57.

Belongs to the ATPase protein 8 family. As to quaternary structure, component of the ATP synthase complex composed at least of ATP5F1A/subunit alpha, ATP5F1B/subunit beta, ATP5MC1/subunit c (homooctomer), MT-ATP6/subunit a, MT-ATP8/subunit 8, ATP5ME/subunit e, ATP5MF/subunit f, ATP5MG/subunit g, ATP5MK/subunit k, ATP5MJ/subunit j, ATP5F1C/subunit gamma, ATP5F1D/subunit delta, ATP5F1E/subunit epsilon, ATP5PF/subunit F6, ATP5PB/subunit b, ATP5PD/subunit d, ATP5PO/subunit OSCP. ATP synthase complex consists of a soluble F(1) head domain (subunits alpha(3) and beta(3)) - the catalytic core - and a membrane F(0) domain - the membrane proton channel (subunits c, a, 8, e, f, g, k and j). These two domains are linked by a central stalk (subunits gamma, delta, and epsilon) rotating inside the F1 region and a stationary peripheral stalk (subunits F6, b, d, and OSCP). Interacts with PRICKLE3.

Its subcellular location is the mitochondrion membrane. In terms of biological role, subunit 8, of the mitochondrial membrane ATP synthase complex (F(1)F(0) ATP synthase or Complex V) that produces ATP from ADP in the presence of a proton gradient across the membrane which is generated by electron transport complexes of the respiratory chain. ATP synthase complex consist of a soluble F(1) head domain - the catalytic core - and a membrane F(1) domain - the membrane proton channel. These two domains are linked by a central stalk rotating inside the F(1) region and a stationary peripheral stalk. During catalysis, ATP synthesis in the catalytic domain of F(1) is coupled via a rotary mechanism of the central stalk subunits to proton translocation. In vivo, can only synthesize ATP although its ATP hydrolase activity can be activated artificially in vitro. Part of the complex F(0) domain. This is ATP synthase F(0) complex subunit 8 from Equus asinus (Donkey).